A 411-amino-acid polypeptide reads, in one-letter code: Putative ion-transport protein YfeO (411 aa).

The next 11 helical transmembrane spans lie at 9–29 (MLLL…VLIA), 54–74 (DSPF…GLII), 99–119 (ALPG…SLGP), 149–169 (ILAS…AALI), 186–206 (LFAP…FFHP), 223–243 (IASG…AVWC), 258–278 (VLIL…GGPL), 296–316 (LGAG…VIAA), 322–342 (GGRI…LHAH), 343–363 (VEAV…VLVV), and 386–406 (LLCI…LLAA).

The protein belongs to the chloride channel (TC 2.A.49) family.

It is found in the cell membrane. The chain is Putative ion-transport protein YfeO from Salmonella agona (strain SL483).